The following is a 439-amino-acid chain: Tol-Pal system protein TolB (439 aa).

An N-terminal signal peptide occupies residues 1–24 (MRNGMRKIIAGVFIFVFLISNLYA).

Belongs to the TolB family. As to quaternary structure, the Tol-Pal system is composed of five core proteins: the inner membrane proteins TolA, TolQ and TolR, the periplasmic protein TolB and the outer membrane protein Pal. They form a network linking the inner and outer membranes and the peptidoglycan layer.

It localises to the periplasm. Functionally, part of the Tol-Pal system, which plays a role in outer membrane invagination during cell division and is important for maintaining outer membrane integrity. This chain is Tol-Pal system protein TolB, found in Francisella tularensis subsp. tularensis (strain FSC 198).